Consider the following 626-residue polypeptide: Chaperone protein HtpG (626 aa).

Residues 1 to 341 form an a; substrate-binding region; that stretch reads MAKREFKAES…SEDLSLNISR (341 aa). A b region spans residues 342-552; the sequence is EMLQHDRQLK…DGEVTIEMEK (211 aa). The c stretch occupies residues 553 to 626; that stretch reads ILNAMPDNQH…FTNDICKVMA (74 aa).

The protein belongs to the heat shock protein 90 family. As to quaternary structure, homodimer.

The protein resides in the cytoplasm. Molecular chaperone. Has ATPase activity. The protein is Chaperone protein HtpG of Bacillus licheniformis (strain ATCC 14580 / DSM 13 / JCM 2505 / CCUG 7422 / NBRC 12200 / NCIMB 9375 / NCTC 10341 / NRRL NRS-1264 / Gibson 46).